Here is a 504-residue protein sequence, read N- to C-terminus: Beta-xylosidase (504 aa).

Glutamate 160 functions as the Proton donor in the catalytic mechanism. The Nucleophile role is filled by glutamate 280.

The protein belongs to the glycosyl hydrolase 39 family.

The catalysed reaction is Hydrolysis of (1-&gt;4)-beta-D-xylans, to remove successive D-xylose residues from the non-reducing termini.. The protein is Beta-xylosidase (xynB) of Geobacillus stearothermophilus (Bacillus stearothermophilus).